Consider the following 459-residue polypeptide: Ceramide glucosyltransferase 3 (459 aa).

The chain crosses the membrane as a helical span at residues 77–97; the sequence is LIAIVGFVFVFCLYLIHIIAL. D156 is a short sequence motif (D1). A short sequence motif (D2) is located at residue D208. Residue D302 is a short sequence motif, D3. The active-site Proton acceptor is the D302. Positions 338–342 match the (Q/R)XXRW motif; sequence RICRW. 2 helical membrane-spanning segments follow: residues 367-387 and 415-435; these read LIMA…ILIL and FMLI…KALL.

Belongs to the glycosyltransferase 2 family. In terms of tissue distribution, expressed in pharyngeal intestinal valve, intestinal rectal valve and hypodermis.

It is found in the membrane. The catalysed reaction is an N-acylsphing-4-enine + UDP-alpha-D-glucose = a beta-D-glucosyl-(1&lt;-&gt;1')-N-acylsphing-4-enine + UDP + H(+). It carries out the reaction an N-acyl-15-methylhexadecasphing-4-enine + UDP-alpha-D-glucose = an N-acyl-1-beta-D-glucosyl-15-methylhexadecasphing-4-enine + UDP + H(+). It functions in the pathway lipid metabolism; sphingolipid metabolism. Catalyzes the first glycosylation step in glycosphingolipid biosynthesis, the transfer of glucose to ceramide to produce glucosylceramides (GlcCer). GlcCer are known to contribute to the physical properties and physiological functions of membranes and may regulate signal transduction. Seems to be the major active form in the nematode. Only branched-chain sphingoid bases like 15-methylhexadecasphing-4-enine are used for generating complex sphingolipids in Caenorhabditis elegans. Together with cgt-1, plays a role in the trafficking of proteins such as mig-14 to the cell membrane in intestinal cells. In Caenorhabditis elegans, this protein is Ceramide glucosyltransferase 3.